We begin with the raw amino-acid sequence, 281 residues long: MADPSFASGRLGSRLQGSIAMIAEELLRAGRLDDALKALQEQVRSQPSNATLRIFLFQLLAVMGQWARAQNQLKVVGELDASALPMVQTYSTAIDCEALRREVFAGRLTPVILGQPAEWIAPLLQALSLDAEGHGEAAQALREQAFDAAPAVPGRIGEAPFAWLADADTRLGPVLEVIVNGRYAWLPMSNLRSLKVEAPSDLRDLVWLPAELTLANGGATVALLPARYAETVEHGDDAARLGRKTEWLDSGLPVGQRLFVTDAGETALFDLRELDFEPTDA.

Interacts with TssB1 (via N-terminus). Interacts with ClpV1.

Its function is as follows. Component of the H1 type VI (H1-T6SS) secretion system that plays a role in the release of toxins targeting both eukaryotic and prokaryotic species. Forms a stable complex with TssB1. This complex, although not crucial for the H1-T6SS function, may fine-tune the assembly of the system. Plays a role in the interaction between ClpV1 and the TssC1/TssB1 sheath. The sequence is that of Type VI secretion system accessory component TagJ from Pseudomonas aeruginosa (strain ATCC 15692 / DSM 22644 / CIP 104116 / JCM 14847 / LMG 12228 / 1C / PRS 101 / PAO1).